We begin with the raw amino-acid sequence, 272 residues long: MKMFDNIKNVGKLIRLERIFDKKSEKTVIIPMDHGVSSGPLDGIKDMRITTNAVADGGANAVLGHKGLVRHGHRGYGRDIGLIIHMSAGTSISPDPNKKVIVTTVEDAIRLGADAVSLHVNVGAESDFEMYRDLGLISETCEQWGMPLIAMMYPRGPKIKDEKDPEVVAHAARLGAELGADIIKTNYTGDPDTFKEVVKGCPAPIVIAGGPKTNTDEEFLQMVKDAMHAGGKGVASGRNVFQHKDVKGITSAICKIVHEDAEVKEALKEIKI.

Asp-33 acts as the Proton acceptor in catalysis. 1-deoxy-D-threo-hexo-2,5-diulose 6-phosphate-binding positions include 33–37 (DHGVS) and 153–155 (YPR). Residue Tyr-153 is the Proton donor of the active site. Residue Lys-184 is the Schiff-base intermediate with substrate of the active site. 1-deoxy-D-threo-hexo-2,5-diulose 6-phosphate is bound by residues 209–210 (GG) and 237–238 (GR).

Belongs to the DeoC/FbaB aldolase family. ADHS subfamily. As to quaternary structure, homodecamer.

It carries out the reaction 1-deoxy-D-threo-hexo-2,5-diulose 6-phosphate + L-aspartate 4-semialdehyde = 2,3-dioxopropyl phosphate + 2-amino-2,3,7-trideoxy-D-lyxo-hept-6-ulosonate. Catalyzes a transaldol reaction between 6-deoxy-5-ketofructose 1-phosphate (DKFP) and L-aspartate semialdehyde (ASA) with an elimination of hydroxypyruvaldehyde phosphate to yield 2-amino-3,7-dideoxy-D-threo-hept-6-ulosonate (ADH). Plays a key role in an alternative pathway of the biosynthesis of 3-dehydroquinate (DHQ), which is involved in the canonical pathway for the biosynthesis of aromatic amino acids. This Methanococcus maripaludis (strain C5 / ATCC BAA-1333) protein is 2-amino-3,7-dideoxy-D-threo-hept-6-ulosonate synthase.